The sequence spans 63 residues: Prokaryotic ubiquitin-like protein UBact (63 aa).

A disordered region spans residues 1 to 63; sequence MSGRSTFGRF…SRRYRQRTGE (63 aa). Residues 17-50 show a composition bias toward basic and acidic residues; sequence PWERKPGDDEGGPKRPKVERPDTNDLLKRMRRVD. An Isoglutamyl lysine isopeptide (Glu-Lys) (interchain with K-? in acceptor proteins) cross-link involves residue Glu63.

The protein belongs to the ubiquitin-like protein UBact family.

Its function is as follows. May function as a protein modifier covalently attached to lysine residues of substrate proteins. This may serve to target the modified proteins for degradation by proteasomes. This is Prokaryotic ubiquitin-like protein UBact from Handelsmanbacteria sp. (strain RIFCSPLOWO2_12_FULL_64_10).